Consider the following 403-residue polypeptide: S-adenosylmethionine synthase (403 aa).

ATP is bound at residue His15. Asp17 serves as a coordination point for Mg(2+). Position 43 (Glu43) interacts with K(+). Residues Glu56 and Gln99 each contribute to the L-methionine site. The tract at residues 99-109 (QSPHIAQGVDR) is flexible loop. ATP-binding positions include 166–168 (DAK), 232–233 (KF), Asp241, 247–248 (RK), Ala264, and Lys268. Residue Asp241 participates in L-methionine binding. Lys272 lines the L-methionine pocket.

This sequence belongs to the AdoMet synthase family. Homotetramer; dimer of dimers. The cofactor is Mg(2+). K(+) is required as a cofactor.

The protein resides in the cytoplasm. The catalysed reaction is L-methionine + ATP + H2O = S-adenosyl-L-methionine + phosphate + diphosphate. It functions in the pathway amino-acid biosynthesis; S-adenosyl-L-methionine biosynthesis; S-adenosyl-L-methionine from L-methionine: step 1/1. Catalyzes the formation of S-adenosylmethionine (AdoMet) from methionine and ATP. The overall synthetic reaction is composed of two sequential steps, AdoMet formation and the subsequent tripolyphosphate hydrolysis which occurs prior to release of AdoMet from the enzyme. This Stenotrophomonas maltophilia (strain R551-3) protein is S-adenosylmethionine synthase.